Consider the following 474-residue polypeptide: 3-isopropylmalate dehydratase large subunit (474 aa).

The disordered stretch occupies residues 293–313 (GTTPGQGIGITEEIPAPEDLP). Residues cysteine 348, cysteine 408, and cysteine 411 each contribute to the [4Fe-4S] cluster site.

This sequence belongs to the aconitase/IPM isomerase family. LeuC type 1 subfamily. Heterodimer of LeuC and LeuD. It depends on [4Fe-4S] cluster as a cofactor.

It carries out the reaction (2R,3S)-3-isopropylmalate = (2S)-2-isopropylmalate. Its pathway is amino-acid biosynthesis; L-leucine biosynthesis; L-leucine from 3-methyl-2-oxobutanoate: step 2/4. Catalyzes the isomerization between 2-isopropylmalate and 3-isopropylmalate, via the formation of 2-isopropylmaleate. The polypeptide is 3-isopropylmalate dehydratase large subunit (Natronomonas pharaonis (strain ATCC 35678 / DSM 2160 / CIP 103997 / JCM 8858 / NBRC 14720 / NCIMB 2260 / Gabara) (Halobacterium pharaonis)).